A 276-amino-acid chain; its full sequence is Large ribosomal subunit protein uL2 (276 aa).

A disordered region spans residues 219–268 (TVRGSVMNPNDHPHGGGEGRQPVGRKSPMTPWGKPALGLKTRNKKAKSSK).

The protein belongs to the universal ribosomal protein uL2 family. As to quaternary structure, part of the 50S ribosomal subunit. Forms a bridge to the 30S subunit in the 70S ribosome.

In terms of biological role, one of the primary rRNA binding proteins. Required for association of the 30S and 50S subunits to form the 70S ribosome, for tRNA binding and peptide bond formation. It has been suggested to have peptidyltransferase activity; this is somewhat controversial. Makes several contacts with the 16S rRNA in the 70S ribosome. The sequence is that of Large ribosomal subunit protein uL2 from Lactococcus lactis subsp. lactis (strain IL1403) (Streptococcus lactis).